Here is a 630-residue protein sequence, read N- to C-terminus: Transposase B from transposon PsiTn554 (630 aa).

The 87-residue stretch at 216–302 (TYFKQLVKRY…ILEGLFSTLH (87 aa)) folds into the Core-binding (CB) domain. Residues 326–513 (AKPRFIDEFV…FDETLKNEFT (188 aa)) enclose the Tyr recombinase domain. Active-site residues include arginine 363, lysine 391, histidine 465, arginine 468, and histidine 491. The O-(3'-phospho-DNA)-tyrosine intermediate role is filled by tyrosine 500.

It belongs to the 'phage' integrase family.

This chain is Transposase B from transposon PsiTn554 (tnpB), found in Staphylococcus aureus.